The following is a 280-amino-acid chain: Hydroxyacylglutathione hydrolase, mitochondrial (280 aa).

Position 61 is an N6-acetyllysine (Lys61). 4 residues coordinate Zn(2+): His74, His76, Asp78, and His79. The residue at position 88 (Lys88) is an N6-acetyllysine. Residues His130 and Asp154 each coordinate Zn(2+). Substrate is bound by residues 163–165 (KFY) and 193–195 (HEY). His193 provides a ligand contact to Zn(2+). N6-acetyllysine; alternate is present on Lys201. An N6-succinyllysine; alternate modification is found at Lys201. 269–272 (RREK) provides a ligand contact to substrate.

The protein belongs to the metallo-beta-lactamase superfamily. Glyoxalase II family. In terms of assembly, monomer. Zn(2+) serves as cofactor. Testis.

The protein localises to the mitochondrion matrix. Its subcellular location is the cytoplasm. The catalysed reaction is an S-(2-hydroxyacyl)glutathione + H2O = a 2-hydroxy carboxylate + glutathione + H(+). The enzyme catalyses (R)-S-lactoylglutathione + H2O = (R)-lactate + glutathione + H(+). The protein operates within secondary metabolite metabolism; methylglyoxal degradation; (R)-lactate from methylglyoxal: step 2/2. In terms of biological role, thiolesterase that catalyzes the hydrolysis of S-D-lactoyl-glutathione to form glutathione and D-lactic acid. The sequence is that of Hydroxyacylglutathione hydrolase, mitochondrial (HAGH) from Callithrix jacchus (White-tufted-ear marmoset).